The primary structure comprises 391 residues: uncharacterized protein (391 aa).

This is an uncharacterized protein from Rickettsia prowazekii (strain Madrid E).